The primary structure comprises 188 residues: Murein DD-endopeptidase MepS/Murein LD-carboxypeptidase (188 aa).

The N-terminal stretch at 1–26 is a signal peptide; sequence MVKSQPILRYILRGIPAIAVAVLLSA. Cys-27 carries the N-palmitoyl cysteine lipid modification. Cys-27 carries the S-diacylglycerol cysteine lipid modification. Positions 64–185 constitute a NlpC/P60 domain; sequence VDVKSRIMDQ…KRYNEARRVL (122 aa). Cys-94 functions as the Nucleophile in the catalytic mechanism. His-145 functions as the Proton acceptor in the catalytic mechanism. Residue His-157 is part of the active site.

Belongs to the peptidase C40 family. Monomer.

The protein resides in the cell outer membrane. It catalyses the reaction N-acetyl-D-glucosaminyl-N-acetylmuramoyl-L-alanyl-meso-2,6-diaminoheptanedioyl-D-alanine + H2O = N-acetyl-D-glucosaminyl-N-acetylmuramoyl-L-alanyl-meso-2,6-diaminoheptanedioate + D-alanine. It functions in the pathway cell wall biogenesis; cell wall polysaccharide biosynthesis. A murein DD-endopeptidase with specificity for D-Ala-meso-diaminopimelic acid (mDAP) cross-links. Its role is probably to cleave D-Ala-mDAP cross-links to allow insertion of new glycans and thus cell wall expansion. Functionally redundant with MepM and MepH. Also has weak LD-carboxypeptidase activity on L-mDAP-D-Ala peptide bonds. This is Murein DD-endopeptidase MepS/Murein LD-carboxypeptidase (mepS) from Escherichia coli O157:H7.